The sequence spans 360 residues: uncharacterized protein (360 aa).

Position 4–22 (4–22 (KVLHIGAGGFGERWCDTFL)) interacts with NAD(+).

Could be a NAD-dependent oxidoreductase. This is an uncharacterized protein from Sinorhizobium fredii (strain NBRC 101917 / NGR234).